Reading from the N-terminus, the 418-residue chain is Glutamyl-tRNA reductase (418 aa).

Residues 49 to 52, S109, 114 to 116, and Q120 each bind substrate; these read TCNR and EPQ. The active-site Nucleophile is C50. Position 189–194 (189–194) interacts with NADP(+); that stretch reads GAGETI.

It belongs to the glutamyl-tRNA reductase family. Homodimer.

The catalysed reaction is (S)-4-amino-5-oxopentanoate + tRNA(Glu) + NADP(+) = L-glutamyl-tRNA(Glu) + NADPH + H(+). The protein operates within porphyrin-containing compound metabolism; protoporphyrin-IX biosynthesis; 5-aminolevulinate from L-glutamyl-tRNA(Glu): step 1/2. Its function is as follows. Catalyzes the NADPH-dependent reduction of glutamyl-tRNA(Glu) to glutamate 1-semialdehyde (GSA). The protein is Glutamyl-tRNA reductase of Salmonella choleraesuis (strain SC-B67).